Consider the following 839-residue polypeptide: Heat shock 70 kDa protein 4L (839 aa).

Residues serine 74 and serine 508 each carry the phosphoserine modification. Positions 503–554 (LEGDHSDAPMETETSFKNENKDNMDKMQVDQEEGHQKCHAEHTPEEEIDHTG) are enriched in basic and acidic residues. The tract at residues 503–567 (LEGDHSDAPM…KSAVSDKQDR (65 aa)) is disordered. A Phosphothreonine modification is found at threonine 545. Position 579 is a phosphoserine (serine 579). Threonine 761 is subject to Phosphothreonine. The segment at 786–839 (IYKPKPKAEVPEDKPKANSEHNGPMDGQSGTETKSDSTKDSSQHTKSSGEMEVD) is disordered. Basic and acidic residues-rich tracts occupy residues 791–804 (PKAE…KANS) and 818–839 (TKSD…MEVD).

This sequence belongs to the heat shock protein 70 family. In terms of assembly, homodimer.

The protein localises to the cytoplasm. The protein resides in the nucleus. Functionally, possesses chaperone activity in vitro where it inhibits aggregation of citrate synthase. This is Heat shock 70 kDa protein 4L (HSPA4L) from Homo sapiens (Human).